We begin with the raw amino-acid sequence, 441 residues long: Ribosomal protein uS12 methylthiotransferase RimO (441 aa).

The region spanning 5–116 (PTIAFTHLGC…IVDVMQRVEK (112 aa)) is the MTTase N-terminal domain. Residues cysteine 14, cysteine 50, cysteine 79, cysteine 154, cysteine 158, and cysteine 161 each contribute to the [4Fe-4S] cluster site. The 231-residue stretch at 140 to 370 (TTSEGVAYVR…EVQQSISWQQ (231 aa)) folds into the Radical SAM core domain. One can recognise a TRAM domain in the interval 372–438 (QKLVGQLVDV…IYDLYGCLIS (67 aa)).

This sequence belongs to the methylthiotransferase family. RimO subfamily. The cofactor is [4Fe-4S] cluster.

Its subcellular location is the cytoplasm. The catalysed reaction is L-aspartate(89)-[ribosomal protein uS12]-hydrogen + (sulfur carrier)-SH + AH2 + 2 S-adenosyl-L-methionine = 3-methylsulfanyl-L-aspartate(89)-[ribosomal protein uS12]-hydrogen + (sulfur carrier)-H + 5'-deoxyadenosine + L-methionine + A + S-adenosyl-L-homocysteine + 2 H(+). Catalyzes the methylthiolation of an aspartic acid residue of ribosomal protein uS12. In Trichodesmium erythraeum (strain IMS101), this protein is Ribosomal protein uS12 methylthiotransferase RimO.